The following is a 312-amino-acid chain: MKVAVLGAAGGIGQALALLLKTQLPSGSELSLYDIAPVTPGVAVDLSHIPTAVKIKGFSGEDATPALEGADVVLISAGVARKPGMDRSDLFNVNAGIVKNLVQQVSKTCPKACIGIITNPVNTTVAIAAEVLKKAGVYDKNKLFGVTTLDIIRSNTFVAELKGKQPGEVEVPVIGGHSGVTILPLLSQVPGVSFTEQEVADLTKRIQNAGTEVVEAKAGGGSATLSMGQAAARFGLSLVRALQGEQGVVECAYVEGDGQYARFFSQPLLLGKNGVEERKSIGTLSAFEQNALEGMLDTLKKDIALGEEFVNK.

NAD(+) is bound by residues 7 to 13 (GAAGGIG) and aspartate 34. Substrate-binding residues include arginine 81 and arginine 87. Residues asparagine 94 and 117–119 (ITN) each bind NAD(+). Residues asparagine 119 and arginine 153 each contribute to the substrate site. Catalysis depends on histidine 177, which acts as the Proton acceptor. Methionine 227 is a binding site for NAD(+).

It belongs to the LDH/MDH superfamily. MDH type 1 family. Homodimer.

It carries out the reaction (S)-malate + NAD(+) = oxaloacetate + NADH + H(+). Its function is as follows. Catalyzes the reversible oxidation of malate to oxaloacetate. The polypeptide is Malate dehydrogenase (Escherichia coli (strain SE11)).